The following is a 240-amino-acid chain: Manganese transport system ATP-binding protein MntB (240 aa).

Residues 1–233 (MNIQGLTIAY…KIQFAYGDAP (233 aa)) form the ABC transporter domain. 33–40 (GPNGAGKS) provides a ligand contact to ATP.

The protein belongs to the ABC transporter superfamily.

Its subcellular location is the cell membrane. This protein is probably a component of a manganese permease, a binding protein-dependent, ATP-driven transport system. Probably responsible for energy coupling to the transport system. This chain is Manganese transport system ATP-binding protein MntB (mntB), found in Listeria innocua serovar 6a (strain ATCC BAA-680 / CLIP 11262).